The primary structure comprises 556 residues: Genetic interactor of prohibitins 3, mitochondrial (556 aa).

The N-terminal 21 residues, 1–21 (MLNLCHALRGVRQFSCSVIVK), are a transit peptide targeting the mitochondrion. The CP-type G domain maps to 113–305 (ESTLNDILNY…LFDLPGYSTS (193 aa)).

This sequence belongs to the TRAFAC class YlqF/YawG GTPase family. GEP3 subfamily.

Its subcellular location is the mitochondrion. In terms of biological role, interacts genetically with prohibitins and thus may be involved in the mitochondrial lipid metabolism. In Saccharomyces cerevisiae (strain Lalvin EC1118 / Prise de mousse) (Baker's yeast), this protein is Genetic interactor of prohibitins 3, mitochondrial (GEP3).